We begin with the raw amino-acid sequence, 512 residues long: Pantetheinase (512 aa).

Positions 1–23 (MGMSWWLACAAAFSALCVLKASS) are cleaved as a signal peptide. Residues 32 to 308 (YEHAVILPKD…GKLLFAQLKS (277 aa)) enclose the CN hydrolase domain. Residue Glu-81 is the Proton acceptor of the active site. N-linked (GlcNAc...) asparagine glycans are attached at residues Asn-132 and Asn-148. The active-site Proton donor is Lys-180. The Nucleophile role is filled by Cys-213. 2 N-linked (GlcNAc...) asparagine glycosylation sites follow: Asn-316 and Asn-354. Asn-488 carries GPI-anchor amidated asparagine lipidation. Positions 489–512 (ASSDFIAHSLIIMLIVTPIIHYLC) are cleaved as a propeptide — removed in mature form.

Belongs to the carbon-nitrogen hydrolase superfamily. BTD/VNN family. In terms of assembly, monomer. Post-translationally, N-glycosylated. Detected in kidney (at protein level). Ubiquitous.

It localises to the cell membrane. The catalysed reaction is (R)-pantetheine + H2O = cysteamine + (R)-pantothenate. Its function is as follows. Amidohydrolase that hydrolyzes specifically one of the carboamide linkages in D-pantetheine thus recycling pantothenic acid (vitamin B5) and releasing cysteamine. This Mus musculus (Mouse) protein is Pantetheinase (Vnn1).